The sequence spans 269 residues: GTP cyclohydrolase FolE2 (269 aa).

It belongs to the GTP cyclohydrolase IV family.

The enzyme catalyses GTP + H2O = 7,8-dihydroneopterin 3'-triphosphate + formate + H(+). Its pathway is cofactor biosynthesis; 7,8-dihydroneopterin triphosphate biosynthesis; 7,8-dihydroneopterin triphosphate from GTP: step 1/1. In terms of biological role, converts GTP to 7,8-dihydroneopterin triphosphate. This chain is GTP cyclohydrolase FolE2, found in Burkholderia mallei (strain NCTC 10229).